We begin with the raw amino-acid sequence, 92 residues long: Small ribosomal subunit protein uS19 (92 aa).

The protein belongs to the universal ribosomal protein uS19 family.

Functionally, protein S19 forms a complex with S13 that binds strongly to the 16S ribosomal RNA. The sequence is that of Small ribosomal subunit protein uS19 from Leuconostoc mesenteroides subsp. mesenteroides (strain ATCC 8293 / DSM 20343 / BCRC 11652 / CCM 1803 / JCM 6124 / NCDO 523 / NBRC 100496 / NCIMB 8023 / NCTC 12954 / NRRL B-1118 / 37Y).